We begin with the raw amino-acid sequence, 361 residues long: Caffeic acid 3-O-methyltransferase 2 (361 aa).

128–134 (MNQDKVL) is a binding site for substrate. Residues 160–178 (AFEYHGTDPRFNKVFNQGM) form a substrate binding region. S-adenosyl-L-methionine contacts are provided by Gly-206, Asp-229, Asp-249, Met-250, and Lys-263. Catalysis depends on His-267, which acts as the Proton acceptor.

This sequence belongs to the class I-like SAM-binding methyltransferase superfamily. Cation-independent O-methyltransferase family. COMT subfamily. Homodimer.

The catalysed reaction is (E)-caffeate + S-adenosyl-L-methionine = (E)-ferulate + S-adenosyl-L-homocysteine + H(+). The protein operates within aromatic compound metabolism; phenylpropanoid biosynthesis. Catalyzes the conversion of caffeic acid to ferulic acid and of 5-hydroxyferulic acid to sinapic acid. The resulting products may subsequently be converted to the corresponding alcohols that are incorporated into lignins. In Ocimum basilicum (Sweet basil), this protein is Caffeic acid 3-O-methyltransferase 2 (COMT2).